The primary structure comprises 754 residues: MKVLSFIVAAALLGLTGASSNSSPGLLKSDGVVLGDWESAYQKASSFVAGLTTDQKLALITGSSVNSTNGSFSGLTFLDGDMGLQNFFYVSAFSLSSALAMTWDRDAIYAQAKAVGSEFYNKGIQVVAGPTSQPLGRTPWGGRIVEGFGPDPYLNGLASGLTAKGYIDAGVIPGAKHFLLYEQETNRTGGGGGGGGDSGSAPYSSNADDKTLHETYLWPFYDAVKHGLGAVMCAMTKVNGTLSCQNSDLLMKHLKTELGFPGLVWPDTNGQSSALESAVNGEDYGSSSIWSTSTMETLLSNGSLSEARLDDMAVRNLMGYYYVNLDNGLQPEEQSEDAYVDVRGNHSKLIRENGAKSMALLKNKNALPLRKPRVMSVFGAHAGPVLGGPNTAMDIEGSGPTYQGHLATGTGSAQASLPYLVPPYVALTNRIIEDGTMMRWVLNDTYSSSSTSGLITEGTDSTAVDPSFADYATNSDACLVFLNALSGEGADRTELYNDDQDTMVNTVADNCNNTIVIINTVGPRLMDQWIEHDNVTAVLYGSLLGQESGNSIVDILYGDVNPSGRLIHTIAKNESDYNVKICYTAQCNFTEGVYLDYRYFDAHNVTPRYPFGHGLSYTTFSYSDLNIEKPSTLSKYPTGEKAVGGNSDLWDIVGNVSVKVANTGSLDGAEVPQLYLGFPTAAQQPVRQLRGFERVEIASGKQSQVTFQLRRRDISYWDVPAQQWLVASGDYKVYVGASSRDLKLNGTFTVQTSS.

Residues 1-20 (MKVLSFIVAAALLGLTGASS) form the signal peptide. N-linked (GlcNAc...) asparagine glycosylation is found at N66, N69, and N186. A disordered region spans residues 186–206 (NRTGGGGGGGGDSGSAPYSSN). Positions 188 to 198 (TGGGGGGGGDS) are enriched in gly residues. N-linked (GlcNAc...) asparagine glycosylation is present at N239. Residue D267 is part of the active site. N301, N345, N443, N512, N534, N573, N588, N655, and N745 each carry an N-linked (GlcNAc...) asparagine glycan.

This sequence belongs to the glycosyl hydrolase 3 family.

It localises to the secreted. The enzyme catalyses Hydrolysis of terminal, non-reducing beta-D-glucosyl residues with release of beta-D-glucose.. It participates in glycan metabolism; cellulose degradation. Beta-glucosidases are one of a number of cellulolytic enzymes involved in the degradation of cellulosic biomass. Catalyzes the last step releasing glucose from the inhibitory cellobiose. This chain is Probable beta-glucosidase D (bglD), found in Aspergillus niger (strain ATCC MYA-4892 / CBS 513.88 / FGSC A1513).